The following is a 214-amino-acid chain: Small ribosomal subunit protein eS1 (214 aa).

This sequence belongs to the eukaryotic ribosomal protein eS1 family.

The chain is Small ribosomal subunit protein eS1 from Aeropyrum pernix (strain ATCC 700893 / DSM 11879 / JCM 9820 / NBRC 100138 / K1).